Reading from the N-terminus, the 334-residue chain is Phosphoribosylformylglycinamidine cyclo-ligase (334 aa).

The protein belongs to the AIR synthase family.

It localises to the cytoplasm. It carries out the reaction 2-formamido-N(1)-(5-O-phospho-beta-D-ribosyl)acetamidine + ATP = 5-amino-1-(5-phospho-beta-D-ribosyl)imidazole + ADP + phosphate + H(+). Its pathway is purine metabolism; IMP biosynthesis via de novo pathway; 5-amino-1-(5-phospho-D-ribosyl)imidazole from N(2)-formyl-N(1)-(5-phospho-D-ribosyl)glycinamide: step 2/2. This Pyrococcus furiosus (strain ATCC 43587 / DSM 3638 / JCM 8422 / Vc1) protein is Phosphoribosylformylglycinamidine cyclo-ligase.